The primary structure comprises 202 residues: MYKRLVQEFFPKLDFENLEKYVNLIEFSNKNFNLTAFSGDILWKEGIFESIFTMNFIVGLVNNKENKKLKILDIGAGSGFPSIPFLITNPEIELTISESMQKRCQFLKDVSEKLDLKFNLICKPVQEINPQKFDIITARAVANLEKLEKITKKIHFPKTLLAFIKGPKVFNEVQNCKNCNYKIIKVNNNINKKIFIAFKQVS.

S-adenosyl-L-methionine is bound by residues glycine 75, phenylalanine 80, 125 to 126, and arginine 139; that span reads VQ.

Belongs to the methyltransferase superfamily. RNA methyltransferase RsmG family.

The protein resides in the cytoplasm. Its function is as follows. Specifically methylates the N7 position of a guanine in 16S rRNA. The sequence is that of Ribosomal RNA small subunit methyltransferase G from Mesomycoplasma hyopneumoniae (strain J / ATCC 25934 / NCTC 10110) (Mycoplasma hyopneumoniae).